Consider the following 201-residue polypeptide: Holliday junction branch migration complex subunit RuvA (201 aa).

The tract at residues 1 to 64 (MFNSISGILS…EDQMRLFGFP (64 aa)) is domain I. The interval 65–140 (NQAERSLFLD…KLTNLNEVSS (76 aa)) is domain II. The interval 140 to 144 (SKGQA) is flexible linker. Residues 145–201 (SVSCEYEDIVTALTEMGFERKSVIVQVEKIAEEMKAAGSDPLKNEEELFRRSIVALS) are domain III.

It belongs to the RuvA family. Homotetramer. Forms an RuvA(8)-RuvB(12)-Holliday junction (HJ) complex. HJ DNA is sandwiched between 2 RuvA tetramers; dsDNA enters through RuvA and exits via RuvB. An RuvB hexamer assembles on each DNA strand where it exits the tetramer. Each RuvB hexamer is contacted by two RuvA subunits (via domain III) on 2 adjacent RuvB subunits; this complex drives branch migration. In the full resolvosome a probable DNA-RuvA(4)-RuvB(12)-RuvC(2) complex forms which resolves the HJ.

The protein resides in the cytoplasm. The RuvA-RuvB-RuvC complex processes Holliday junction (HJ) DNA during genetic recombination and DNA repair, while the RuvA-RuvB complex plays an important role in the rescue of blocked DNA replication forks via replication fork reversal (RFR). RuvA specifically binds to HJ cruciform DNA, conferring on it an open structure. The RuvB hexamer acts as an ATP-dependent pump, pulling dsDNA into and through the RuvAB complex. HJ branch migration allows RuvC to scan DNA until it finds its consensus sequence, where it cleaves and resolves the cruciform DNA. In Treponema denticola (strain ATCC 35405 / DSM 14222 / CIP 103919 / JCM 8153 / KCTC 15104), this protein is Holliday junction branch migration complex subunit RuvA.